The chain runs to 538 residues: uncharacterized protein (538 aa).

Residues 1–13 (MYNNNSSTSSDSS) are compositionally biased toward low complexity. Positions 1-43 (MYNNNSSTSSDSSNSEEKANAQHASSTDSTSEHTDPAVADEGF) are disordered. Helical transmembrane passes span 97-117 (ILHVALLAFTTLTASWGSSVF), 134-154 (VALLGMSLYVCGFASGPILWA), 163-183 (KIPLIVGMFMFSIFSIAVAVA), 194-214 (FFSGFCASSPLSVVAAAFADM), 226-246 (IFACITFAGPLIGPIAGGFLA), 254-274 (WTEYITSFMGFFSTLCLLFMK), 328-348 (PIVFLLTLYMSFVYGILYLLL), 367-387 (ALPYIGLLVGVILGAALIAYF), 408-428 (LPPMMIGSVLFPAGIFWLAWS), 434-454 (VHWIVPTLSGLLTGCGILTIF), 458-478 (LIYLIDAYLFRAASVIAANTI), and 504-524 (GSLLGFIATALIPIPTLFFIF).

Belongs to the major facilitator superfamily. CAR1 family.

Its subcellular location is the endoplasmic reticulum. It is found in the membrane. This is an uncharacterized protein from Schizosaccharomyces pombe (strain 972 / ATCC 24843) (Fission yeast).